The chain runs to 209 residues: HTH-type transcriptional repressor BepR (209 aa).

The 61-residue stretch at 9 to 69 (AETREAILLA…SIIGRARFPQ (61 aa)) folds into the HTH tetR-type domain. A DNA-binding region (H-T-H motif) is located at residues 32–51 (TLTEIACYAGVTRGAIYFHF).

Represses expression of bepDE. This is HTH-type transcriptional repressor BepR (bepR) from Brucella suis biovar 1 (strain 1330).